The chain runs to 157 residues: Small ribosomal subunit protein uS7 (157 aa).

It belongs to the universal ribosomal protein uS7 family. As to quaternary structure, part of the 30S ribosomal subunit. Contacts proteins S9 and S11.

Its function is as follows. One of the primary rRNA binding proteins, it binds directly to 16S rRNA where it nucleates assembly of the head domain of the 30S subunit. Is located at the subunit interface close to the decoding center, probably blocks exit of the E-site tRNA. The protein is Small ribosomal subunit protein uS7 of Chlamydia caviae (strain ATCC VR-813 / DSM 19441 / 03DC25 / GPIC) (Chlamydophila caviae).